A 1001-amino-acid polypeptide reads, in one-letter code: Receptor-type tyrosine-protein phosphatase N2 (1001 aa).

Positions 1–27 (MGPPLPLLLLLLLPPPLPRALPAPASA) are cleaved as a signal peptide. An involved in localization to secretory granules; interaction with CPE region spans residues 1–407 (MGPPLPLLLL…PEGPLLEKSS (407 aa)). Over 28–600 (RGRQLPGRLG…HQEEQEDSTK (573 aa)) the chain is Extracellular. Residue Arg-259 is modified to Omega-N-methylarginine. 3 disordered regions span residues 271-296 (PFSATALSQRWPPPPGDAKDSPSMDD), 308-359 (QQNS…DAPE), and 394-459 (SPLL…LEDQ). Over residues 312–325 (EVDRLGPLKEEKAD) the composition is skewed to basic and acidic residues. Ser-339 bears the Phosphoserine mark. Basic and acidic residues predominate over residues 340–355 (QESHGRGAEGQPREQT). The span at 394-404 (SPLLPEGPLLE) shows a compositional bias: low complexity. A compositionally biased stretch (basic and acidic residues) spans 405 to 416 (KSSREEIKKSEQ). Positions 417–428 (PEEVLSSEEETA) are enriched in acidic residues. Residues Ser-422 and Ser-423 each carry the phosphoserine modification. The span at 429 to 459 (GVEHVRSRTYSKDLFERKPNSEPQPRRLEDQ) shows a compositional bias: basic and acidic residues. Asn-550 is a glycosylation site (N-linked (GlcNAc...) asparagine). The chain crosses the membrane as a helical span at residues 601–621 (FILLTFLSIACILGVLLASSL). Residues 622 to 1001 (AYCLRHNSHY…VNAILKALPQ (380 aa)) are Cytoplasmic-facing. The Tyrosine-based internalization motif signature appears at 652 to 661 (YQELCRQRMA). The segment at 663-705 (RPQDRSEGPHTSRINSVSSQFSDGPMPSPSARSSTSSWSEEPV) is disordered. Residues 674 to 684 (SRINSVSSQFS) are compositionally biased toward polar residues. A phosphoserine mark is found at Ser-678 and Ser-684. The segment covering 691–705 (PSARSSTSSWSEEPV) has biased composition (low complexity). Thr-697 bears the Phosphothreonine mark. Residues 731–991 (LEKEWEALCA…EFALTAVAEE (261 aa)) form the Tyrosine-protein phosphatase domain. Substrate is bound by residues Asp-899 and 931-937 (CSDGAGR). The active-site Phosphocysteine intermediate is the Cys-931. The residue at position 956 (Lys-956) is an N6-acetyllysine. Gln-976 provides a ligand contact to substrate. The short motif at 990 to 996 (EEVNAIL) is the Leucine-based sorting signal element.

It belongs to the protein-tyrosine phosphatase family. Self-associates. Interacts (via cytoplasmic domain) with PTPRN (via cytoplasmic domain). Interacts (precursor form) with CPE. Interacts with HAP1 isoform A. Interacts with AP2A1 or AP2A2 and AP1G1; indicative for an association with adaptor protein complex 2 (AP-2) and adaptor protein complex 1 (AP-1). Interacts with AP2M1; indicative for an association with adaptor protein complex 2 (AP-2). Interacts with MYO5A. Post-translationally, subject to proteolytic cleavage at multiple sites during maturation of secretory granules. In the brain at least IA-2beta71, IA-2beta64 and IA-2beta60 have been detected, in the pancreas and a pancreatic beta cell line only IA-2beta60 has been detected. As to expression, detected in brain. Detected in pancreas islets (at protein level). Detected in pancreas and brain.

The protein resides in the cytoplasmic vesicle. The protein localises to the secretory vesicle membrane. It is found in the secretory vesicle. Its subcellular location is the synaptic vesicle membrane. The enzyme catalyses O-phospho-L-tyrosyl-[protein] + H2O = L-tyrosyl-[protein] + phosphate. Its function is as follows. Plays a role in vesicle-mediated secretory processes. Required for normal accumulation of secretory vesicles in hippocampus, pituitary and pancreatic islets. Required for the accumulation of normal levels of insulin-containing vesicles and preventing their degradation. Plays a role in insulin secretion in response to glucose stimuli. Required for normal accumulation of the neurotransmitters norepinephrine, dopamine and serotonin in the brain. In females, but not in males, required for normal accumulation and secretion of pituitary hormones, such as luteinizing hormone (LH) and follicle-stimulating hormone (FSH). Required to maintain normal levels of renin expression and renin release. May regulate catalytic active protein-tyrosine phosphatases such as PTPRA through dimerization. Has phosphatidylinositol phosphatase activity; the PIPase activity is involved in its ability to regulate insulin secretion. Can dephosphorylate phosphatidylinositol 4,5-biphosphate (PI(4,5)P2), phosphatidylinositol 5-phosphate and phosphatidylinositol 3-phosphate. Regulates PI(4,5)P2 level in the plasma membrane and localization of cofilin at the plasma membrane and thus is indirectly involved in regulation of actin dynamics related to cell migration and metastasis; upon hydrolysis of PI(4,5)P2 cofilin is released from the plasma membrane and acts in the cytoplasm in severing F-actin filaments. This is Receptor-type tyrosine-protein phosphatase N2 (Ptprn2) from Mus musculus (Mouse).